The following is a 290-amino-acid chain: RIO-type serine/threonine-protein kinase Rio1 (290 aa).

A Protein kinase domain is found at 76–290 (TEYIGIVNSG…PIDEAMIKQL (215 aa)). ATP contacts are provided by residues 82 to 90 (VNSGKEAVV) and K103. The Proton acceptor role is filled by D214. The Mg(2+) site is built by N219 and D231. D231 serves as the catalytic 4-aspartylphosphate intermediate.

The protein belongs to the protein kinase superfamily. RIO-type Ser/Thr kinase family.

It catalyses the reaction L-seryl-[protein] + ATP = O-phospho-L-seryl-[protein] + ADP + H(+). The catalysed reaction is L-threonyl-[protein] + ATP = O-phospho-L-threonyl-[protein] + ADP + H(+). It carries out the reaction ATP + H2O = ADP + phosphate + H(+). Functionally, despite the protein kinase domain is proposed to act predominantly as an ATPase. In Methanocaldococcus jannaschii (strain ATCC 43067 / DSM 2661 / JAL-1 / JCM 10045 / NBRC 100440) (Methanococcus jannaschii), this protein is RIO-type serine/threonine-protein kinase Rio1 (rio1).